The sequence spans 313 residues: 4-hydroxyproline 2-epimerase (313 aa).

Positions 1–23 (MHVIDSHTGGEPTRVILSGGPHL) are disordered. The active-site Proton acceptor is the C85. Substrate is bound by residues 86–87 (GH), H205, and D231. The active-site Proton donor is the C235. A substrate-binding site is contributed by 236–237 (GT).

Belongs to the proline racemase family.

The enzyme catalyses trans-4-hydroxy-L-proline = cis-4-hydroxy-D-proline. Catalyzes the epimerization of trans-4-hydroxy-L-proline (t4LHyp) to cis-4-hydroxy-D-proline (c4DHyp). Is likely involved in a degradation pathway that converts t4LHyp to alpha-ketoglutarate. Displays no proline racemase activity. In Ruegeria pomeroyi (strain ATCC 700808 / DSM 15171 / DSS-3) (Silicibacter pomeroyi), this protein is 4-hydroxyproline 2-epimerase.